A 638-amino-acid polypeptide reads, in one-letter code: Threonine--tRNA ligase (638 aa).

Residues Met-1–Tyr-59 enclose the TGS domain. The catalytic stretch occupies residues Asp-243 to Pro-536. Cys-336, His-387, and His-513 together coordinate Zn(2+).

The protein belongs to the class-II aminoacyl-tRNA synthetase family. Homodimer. The cofactor is Zn(2+).

The protein localises to the cytoplasm. It carries out the reaction tRNA(Thr) + L-threonine + ATP = L-threonyl-tRNA(Thr) + AMP + diphosphate + H(+). In terms of biological role, catalyzes the attachment of threonine to tRNA(Thr) in a two-step reaction: L-threonine is first activated by ATP to form Thr-AMP and then transferred to the acceptor end of tRNA(Thr). Also edits incorrectly charged L-seryl-tRNA(Thr). This is Threonine--tRNA ligase from Aquifex aeolicus (strain VF5).